The chain runs to 426 residues: Glutamate-1-semialdehyde 2,1-aminomutase (426 aa).

Lys265 bears the N6-(pyridoxal phosphate)lysine mark.

The protein belongs to the class-III pyridoxal-phosphate-dependent aminotransferase family. HemL subfamily. Homodimer. The cofactor is pyridoxal 5'-phosphate.

Its subcellular location is the cytoplasm. It carries out the reaction (S)-4-amino-5-oxopentanoate = 5-aminolevulinate. It functions in the pathway porphyrin-containing compound metabolism; protoporphyrin-IX biosynthesis; 5-aminolevulinate from L-glutamyl-tRNA(Glu): step 2/2. The chain is Glutamate-1-semialdehyde 2,1-aminomutase from Alteromonas mediterranea (strain DSM 17117 / CIP 110805 / LMG 28347 / Deep ecotype).